A 323-amino-acid polypeptide reads, in one-letter code: 1D-myo-inositol 2-acetamido-2-deoxy-alpha-D-glucopyranoside deacetylase (323 aa).

H28, D31, and H163 together coordinate Zn(2+).

It belongs to the MshB deacetylase family. Zn(2+) serves as cofactor.

It catalyses the reaction 1D-myo-inositol 2-acetamido-2-deoxy-alpha-D-glucopyranoside + H2O = 1D-myo-inositol 2-amino-2-deoxy-alpha-D-glucopyranoside + acetate. In terms of biological role, catalyzes the deacetylation of 1D-myo-inositol 2-acetamido-2-deoxy-alpha-D-glucopyranoside (GlcNAc-Ins) in the mycothiol biosynthesis pathway. The polypeptide is 1D-myo-inositol 2-acetamido-2-deoxy-alpha-D-glucopyranoside deacetylase (Streptomyces scabiei (strain 87.22)).